A 209-amino-acid polypeptide reads, in one-letter code: Orotate phosphoribosyltransferase (209 aa).

5-phospho-alpha-D-ribose 1-diphosphate-binding positions include Arg96, Lys100, His102, and 122 to 130; that span reads EDLISTGGS. Ser126 serves as a coordination point for orotate.

Belongs to the purine/pyrimidine phosphoribosyltransferase family. PyrE subfamily. As to quaternary structure, homodimer. Requires Mg(2+) as cofactor.

It carries out the reaction orotidine 5'-phosphate + diphosphate = orotate + 5-phospho-alpha-D-ribose 1-diphosphate. It functions in the pathway pyrimidine metabolism; UMP biosynthesis via de novo pathway; UMP from orotate: step 1/2. Its function is as follows. Catalyzes the transfer of a ribosyl phosphate group from 5-phosphoribose 1-diphosphate to orotate, leading to the formation of orotidine monophosphate (OMP). The chain is Orotate phosphoribosyltransferase from Streptococcus gordonii (strain Challis / ATCC 35105 / BCRC 15272 / CH1 / DL1 / V288).